The following is a 922-amino-acid chain: Non-centrosomal microtubule array protein 1 (922 aa).

The span at 1-10 (MSNERVSTGS) shows a compositional bias: polar residues. Disordered regions lie at residues 1 to 134 (MSNE…HLPP), 250 to 277 (PVRL…TVPR), 465 to 491 (KSRH…QMNL), and 533 to 563 (TQKE…SNLS). 2 stretches are compositionally biased toward basic and acidic residues: residues 43–54 (SMERKDMPDRPK) and 70–94 (PKDR…KECA). Over residues 99-113 (SNTSSEHSSRSNSST) the composition is skewed to low complexity. Basic and acidic residues-rich tracts occupy residues 256-276 (RGDT…DTVP) and 468-484 (HLSE…ERRG). The segment covering 539 to 563 (SHSTPSQSRHSSSKSSHFNGSSNLS) has biased composition (low complexity). Residues 564 to 728 (TSEQLRLQEM…RSVSTLRLEQ (165 aa)) adopt a coiled-coil conformation.

It is found in the cytoplasm. Its subcellular location is the cytoskeleton. It localises to the apical cell membrane. The protein resides in the cell junction. The protein localises to the hemidesmosome. It is found in the adherens junction. In terms of biological role, plays a role in the assembly of microtubule arrays in the germline acting redundantly with ptrn-1 to control circumferential microtubule assembly along the body which is necessary for larval development, viability, and morphology and integrity of the epidermis. Required for microtubule stability and anchorage by binding to microtubule minus ends. Recruited to hemidesomosomes in early embryonic elongation to direct the nucleation and growth of non-centrosomal microtubules. Functionally, required for normal nuclear migration in the embryonic epidermis. Directs the assembly of non-centrosomal microtubule arrays that determine the position of nuclei within intracellular compartments in the epidermis and this is independent of ptrn-1 activity. The protein is Non-centrosomal microtubule array protein 1 of Caenorhabditis elegans.